The chain runs to 158 residues: NADH-quinone oxidoreductase subunit B (158 aa).

Residues cysteine 37, cysteine 38, cysteine 102, and cysteine 132 each coordinate [4Fe-4S] cluster.

This sequence belongs to the complex I 20 kDa subunit family. NDH-1 is composed of 14 different subunits. Subunits NuoB, C, D, E, F, and G constitute the peripheral sector of the complex. [4Fe-4S] cluster is required as a cofactor.

The protein localises to the cell inner membrane. The catalysed reaction is a quinone + NADH + 5 H(+)(in) = a quinol + NAD(+) + 4 H(+)(out). Its function is as follows. NDH-1 shuttles electrons from NADH, via FMN and iron-sulfur (Fe-S) centers, to quinones in the respiratory chain. The immediate electron acceptor for the enzyme in this species is believed to be ubiquinone. Couples the redox reaction to proton translocation (for every two electrons transferred, four hydrogen ions are translocated across the cytoplasmic membrane), and thus conserves the redox energy in a proton gradient. In Acidithiobacillus ferrooxidans (strain ATCC 23270 / DSM 14882 / CIP 104768 / NCIMB 8455) (Ferrobacillus ferrooxidans (strain ATCC 23270)), this protein is NADH-quinone oxidoreductase subunit B.